Consider the following 598-residue polypeptide: Transcription factor himD (598 aa).

Residues C18–C47 constitute a DNA-binding region (zn(2)-C6 fungal-type). The segment at T87–D110 is disordered.

Its subcellular location is the nucleus. Transcription factor that, with himB, probably co-regulates the him gene cluster that mediates the biosynthesis of himeic acid A, a ubiquitin-activating enzyme (E1) inhibitor. The chain is Transcription factor himD from Aspergillus japonicus.